Here is a 425-residue protein sequence, read N- to C-terminus: tRNA(Ile)-lysidine synthase (425 aa).

27–32 (SGGLDS) contacts ATP.

The protein belongs to the tRNA(Ile)-lysidine synthase family.

The protein localises to the cytoplasm. The enzyme catalyses cytidine(34) in tRNA(Ile2) + L-lysine + ATP = lysidine(34) in tRNA(Ile2) + AMP + diphosphate + H(+). Functionally, ligates lysine onto the cytidine present at position 34 of the AUA codon-specific tRNA(Ile) that contains the anticodon CAU, in an ATP-dependent manner. Cytidine is converted to lysidine, thus changing the amino acid specificity of the tRNA from methionine to isoleucine. This chain is tRNA(Ile)-lysidine synthase, found in Streptococcus pneumoniae (strain 70585).